Reading from the N-terminus, the 484-residue chain is UDP-N-acetylmuramoyl-L-alanyl-D-glutamate--2,6-diaminopimelate ligase (484 aa).

UDP-N-acetyl-alpha-D-muramoyl-L-alanyl-D-glutamate is bound at residue Ser30. Residue 109–115 participates in ATP binding; that stretch reads GTNGKTS. UDP-N-acetyl-alpha-D-muramoyl-L-alanyl-D-glutamate-binding positions include 151–152, Ser178, and Arg186; that span reads TT. An N6-carboxylysine modification is found at Lys218. Residues Arg379, 403-406, Gly455, and Glu459 contribute to the meso-2,6-diaminopimelate site; that span reads DNPR. Positions 403 to 406 match the Meso-diaminopimelate recognition motif motif; the sequence is DNPR.

Belongs to the MurCDEF family. MurE subfamily. Requires Mg(2+) as cofactor. Post-translationally, carboxylation is probably crucial for Mg(2+) binding and, consequently, for the gamma-phosphate positioning of ATP.

It is found in the cytoplasm. The enzyme catalyses UDP-N-acetyl-alpha-D-muramoyl-L-alanyl-D-glutamate + meso-2,6-diaminopimelate + ATP = UDP-N-acetyl-alpha-D-muramoyl-L-alanyl-gamma-D-glutamyl-meso-2,6-diaminopimelate + ADP + phosphate + H(+). It participates in cell wall biogenesis; peptidoglycan biosynthesis. Its function is as follows. Catalyzes the addition of meso-diaminopimelic acid to the nucleotide precursor UDP-N-acetylmuramoyl-L-alanyl-D-glutamate (UMAG) in the biosynthesis of bacterial cell-wall peptidoglycan. This is UDP-N-acetylmuramoyl-L-alanyl-D-glutamate--2,6-diaminopimelate ligase from Clostridioides difficile (strain 630) (Peptoclostridium difficile).